The sequence spans 321 residues: Ribosomal RNA small subunit methyltransferase H (321 aa).

S-adenosyl-L-methionine-binding positions include 40 to 42 (GGH), D60, F84, D106, and Q113.

Belongs to the methyltransferase superfamily. RsmH family.

It localises to the cytoplasm. The enzyme catalyses cytidine(1402) in 16S rRNA + S-adenosyl-L-methionine = N(4)-methylcytidine(1402) in 16S rRNA + S-adenosyl-L-homocysteine + H(+). In terms of biological role, specifically methylates the N4 position of cytidine in position 1402 (C1402) of 16S rRNA. The chain is Ribosomal RNA small subunit methyltransferase H from Haemophilus influenzae (strain PittEE).